The chain runs to 1370 residues: DNA-directed RNA polymerase subunit beta (1370 aa).

The protein belongs to the RNA polymerase beta chain family. As to quaternary structure, the RNAP catalytic core consists of 2 alpha, 1 beta, 1 beta' and 1 omega subunit. When a sigma factor is associated with the core the holoenzyme is formed, which can initiate transcription.

It carries out the reaction RNA(n) + a ribonucleoside 5'-triphosphate = RNA(n+1) + diphosphate. Its function is as follows. DNA-dependent RNA polymerase catalyzes the transcription of DNA into RNA using the four ribonucleoside triphosphates as substrates. This is DNA-directed RNA polymerase subunit beta from Albidiferax ferrireducens (strain ATCC BAA-621 / DSM 15236 / T118) (Rhodoferax ferrireducens).